Consider the following 278-residue polypeptide: Phosphatidylglycerol--prolipoprotein diacylglyceryl transferase (278 aa).

4 consecutive transmembrane segments (helical) span residues 17–37 (LAVR…ILLG), 57–77 (ALFY…VLFY), 89–109 (ILAI…VAIA), and 119–139 (LSWL…LGAG). Arg-140 contacts a 1,2-diacyl-sn-glycero-3-phospho-(1'-sn-glycerol). The next 3 membrane-spanning stretches (helical) occupy residues 174-194 (QLYE…LYSA), 200-220 (GAVT…CEFF), and 233-253 (LGIS…IALL).

The protein belongs to the Lgt family.

It is found in the cell inner membrane. The catalysed reaction is L-cysteinyl-[prolipoprotein] + a 1,2-diacyl-sn-glycero-3-phospho-(1'-sn-glycerol) = an S-1,2-diacyl-sn-glyceryl-L-cysteinyl-[prolipoprotein] + sn-glycerol 1-phosphate + H(+). The protein operates within protein modification; lipoprotein biosynthesis (diacylglyceryl transfer). Functionally, catalyzes the transfer of the diacylglyceryl group from phosphatidylglycerol to the sulfhydryl group of the N-terminal cysteine of a prolipoprotein, the first step in the formation of mature lipoproteins. This is Phosphatidylglycerol--prolipoprotein diacylglyceryl transferase from Nitrosomonas europaea (strain ATCC 19718 / CIP 103999 / KCTC 2705 / NBRC 14298).